We begin with the raw amino-acid sequence, 207 residues long: Hydrogenase expression/formation protein HoxM (207 aa).

The Ni(2+) site is built by Glu-19, Asp-65, and His-96.

Belongs to the peptidase A31 family.

In terms of biological role, not known. Could be involved in the processing of hydrogenase. In Azotobacter vinelandii, this protein is Hydrogenase expression/formation protein HoxM (hoxM).